The following is a 371-amino-acid chain: Queuine tRNA-ribosyltransferase (371 aa).

Asp90 serves as the catalytic Proton acceptor. Residues 90-94 (DSGGF), Asp144, Gln189, and Gly215 contribute to the substrate site. The interval 246 to 252 (GVGTPEN) is RNA binding. Asp265 functions as the Nucleophile in the catalytic mechanism. An RNA binding; important for wobble base 34 recognition region spans residues 270–274 (TRNAR). Cys303, Cys305, Cys308, and His334 together coordinate Zn(2+).

It belongs to the queuine tRNA-ribosyltransferase family. In terms of assembly, homodimer. Within each dimer, one monomer is responsible for RNA recognition and catalysis, while the other monomer binds to the replacement base PreQ1. Requires Zn(2+) as cofactor.

The enzyme catalyses 7-aminomethyl-7-carbaguanine + guanosine(34) in tRNA = 7-aminomethyl-7-carbaguanosine(34) in tRNA + guanine. The protein operates within tRNA modification; tRNA-queuosine biosynthesis. Catalyzes the base-exchange of a guanine (G) residue with the queuine precursor 7-aminomethyl-7-deazaguanine (PreQ1) at position 34 (anticodon wobble position) in tRNAs with GU(N) anticodons (tRNA-Asp, -Asn, -His and -Tyr). Catalysis occurs through a double-displacement mechanism. The nucleophile active site attacks the C1' of nucleotide 34 to detach the guanine base from the RNA, forming a covalent enzyme-RNA intermediate. The proton acceptor active site deprotonates the incoming PreQ1, allowing a nucleophilic attack on the C1' of the ribose to form the product. After dissociation, two additional enzymatic reactions on the tRNA convert PreQ1 to queuine (Q), resulting in the hypermodified nucleoside queuosine (7-(((4,5-cis-dihydroxy-2-cyclopenten-1-yl)amino)methyl)-7-deazaguanosine). The sequence is that of Queuine tRNA-ribosyltransferase from Helicobacter pylori (strain Shi470).